We begin with the raw amino-acid sequence, 255 residues long: 4-hydroxy-tetrahydrodipicolinate reductase (255 aa).

NAD(+) contacts are provided by residues 9 to 14, D35, 89 to 91, and 115 to 118; these read GFKGKM, GTT, and APNF. H145 serves as the catalytic Proton donor/acceptor. H146 is a (S)-2,3,4,5-tetrahydrodipicolinate binding site. Residue K149 is the Proton donor of the active site. A (S)-2,3,4,5-tetrahydrodipicolinate-binding site is contributed by 155 to 156; that stretch reads GT.

Belongs to the DapB family.

Its subcellular location is the cytoplasm. The enzyme catalyses (S)-2,3,4,5-tetrahydrodipicolinate + NAD(+) + H2O = (2S,4S)-4-hydroxy-2,3,4,5-tetrahydrodipicolinate + NADH + H(+). The catalysed reaction is (S)-2,3,4,5-tetrahydrodipicolinate + NADP(+) + H2O = (2S,4S)-4-hydroxy-2,3,4,5-tetrahydrodipicolinate + NADPH + H(+). Its pathway is amino-acid biosynthesis; L-lysine biosynthesis via DAP pathway; (S)-tetrahydrodipicolinate from L-aspartate: step 4/4. Its function is as follows. Catalyzes the conversion of 4-hydroxy-tetrahydrodipicolinate (HTPA) to tetrahydrodipicolinate. This Streptococcus pneumoniae (strain P1031) protein is 4-hydroxy-tetrahydrodipicolinate reductase.